Reading from the N-terminus, the 760-residue chain is MSNRKFGMEGFGINRQTSYSFERSQAPQRLYVPPSSRGGDNSEDADLDNIDYMENEEAEEDIEEGGSAAASGGEVDEIDPLDAFMEGIHQEMKSAPPPKPKEKLERYKDDDDDPVESYLKAKKDLGLTLAADALNAGYNSDEEVYAAAKAVDAGMLDYDSDDNPIVVDKRKIEPITALDHSSIDYEPINKDFYEELESISGMTEQETTDYRQRLGIRVSGFDVHRPVKTFEDCGFSSQIMSAIKKQAYEKPTAIQCQALPIVLSGRDVIGIAKTGSGKTAAFVLPMIVHIMDQPELQRDEGPIGVICAPTRELAHQIFLEAKKFSKAYGLRVSAVYGGMSKHEQFKELKAGCEIVVATPGRLIDMLKMKALTMMRASYLVLDEADRMFDLGFEPQVRSIVGQIRPDRQTLLFSATMPWKVEKLAREILSDPIRVTVGEVGMANEDITQVVNVIPSDAEKLPWLLEKLPGMIDEGDVLVFASKKATVDEIEAQLTLNSFKVAALHGDKDQASRMETLQKFKSGVHHVLIATDVAARGLDIKSLKTVVNYDIAKDMDMHVHRIGRTGRAGDRDGVAYTLVTQREARFAGELVNSLVAAGQNVPPELTDLAMKDGRFKSKRDGRKGGKKGRGGGGGNKGVRGVDFGLGIGFSSESSRTPSSKAAPSRSGAINSVRTGVMAQFKNSFVAATPSNPQNQAYPNKRPSLMGFVSGGTIGGDMGRTQSQAPPVAPTQNASSHNSSQNHSQSSENRPRERKRRSGWDN.

Disordered stretches follow at residues Met1–Asp76 and Gln90–Asp113. The span at Asn14 to Pro27 shows a compositional bias: polar residues. Residues Asn41–Glu64 show a composition bias toward acidic residues. Over residues Lys99 to Asp109 the composition is skewed to basic and acidic residues. Position 160 is a phosphoserine (Ser160). Positions Lys228–Cys256 match the Q motif motif. Residues Leu259 to Val434 form the Helicase ATP-binding domain. Ala272–Thr279 contributes to the ATP binding site. The DEAD box signature appears at Asp382–Asp385. In terms of domain architecture, Helicase C-terminal spans Lys459–Ala608. 3 disordered regions span residues Leu604–Arg638, Gly647–Gly666, and Phe706–Asn760. A compositionally biased stretch (basic residues) spans Lys615–Arg628. Positions Gly629–Arg638 are enriched in gly residues. Over residues Ser649–Gly666 the composition is skewed to polar residues. Gly residues predominate over residues Val707–Met716. A compositionally biased stretch (polar residues) spans Arg718–Ala732. The span at Ser733 to Ser745 shows a compositional bias: low complexity. Residues Arg750–Asn760 are compositionally biased toward basic residues.

The protein belongs to the DEAD box helicase family.

It carries out the reaction ATP + H2O = ADP + phosphate + H(+). This is DEAD-box ATP-dependent RNA helicase 24 (RH24) from Arabidopsis thaliana (Mouse-ear cress).